The following is a 1097-amino-acid chain: Platelet-derived growth factor receptor beta (1097 aa).

The first 31 residues, 1–31, serve as a signal peptide directing secretion; it reads MGLPEVMPASVLRGQLLLFVLLLLGPQISQG. 3 consecutive Ig-like C2-type domains span residues 32-119, 128-209, and 213-308; these read LVIT…YIFV, PMDS…YSLQ, and INVS…INVT. Residues 32-531 lie on the Extracellular side of the membrane; that stretch reads LVITPPGPEF…VVPHSLPFKV (500 aa). Residues Asn44, Asn88, and Asn102 are each glycosylated (N-linked (GlcNAc...) asparagine). A disulfide bond links Cys53 and Cys99. Cys148 and Cys189 are oxidised to a cystine. A glycan (N-linked (GlcNAc...) asparagine) is linked at Asn214. Cys234 and Cys290 are oxidised to a cystine. Residues Asn291, Asn306, Asn353, Asn370, Asn444, Asn467, and Asn478 are each glycosylated (N-linked (GlcNAc...) asparagine). In terms of domain architecture, Ig-like C2-type 4 spans 415–523; sequence PVRVLELSES…GRDSQEVTVV (109 aa). An intrachain disulfide couples Cys435 to Cys507. The helical transmembrane segment at 532–552 threads the bilayer; that stretch reads VVISAILALVVLTVISLIILI. Topologically, residues 553–1097 are cytoplasmic; sequence MLWQRKPRYE…PLAEAEDSFL (545 aa). Tyr561, Tyr578, and Tyr580 each carry phosphotyrosine; by autocatalysis. A Protein kinase domain is found at 599–961; sequence LVLGRTLGSG…QLVLLLERLL (363 aa). ATP-binding positions include 605-613 and Lys633; that span reads LGSGAFGQV. Tyr685 carries the post-translational modification Phosphotyrosine; by ABL1 and ABL2. Phosphotyrosine; by autocatalysis occurs at positions 715, 739, 750, 762, 770, 774, and 777. Asp825 functions as the Proton acceptor in the catalytic mechanism. Tyr856 is modified (phosphotyrosine; by autocatalysis). Residues Tyr933 and Tyr969 each carry the phosphotyrosine; by ABL1 and ABL2 modification. Tyr1008 and Tyr1020 each carry phosphotyrosine; by autocatalysis. The disordered stretch occupies residues 1016 to 1097; it reads TDNDYIIPLP…PLAEAEDSFL (82 aa). Positions 1042-1059 are enriched in polar residues; sequence SLASSTLNEVNTSSTISC. The segment covering 1072-1081 has biased composition (low complexity); the sequence is EPEAQLEQPQ.

It belongs to the protein kinase superfamily. Tyr protein kinase family. CSF-1/PDGF receptor subfamily. In terms of assembly, interacts with homodimeric PDGFB and PDGFD, and with heterodimers formed by PDGFA and PDGFB. May also interact with homodimeric PDGFC. Monomer in the absence of bound ligand. Interaction with homodimeric PDGFB, heterodimers formed by PDGFA and PDGFB or homodimeric PDGFD, leads to receptor dimerization, where both PDGFRA homodimers and heterodimers with PDGFRB are observed. Interacts with SH2B2/APS. Interacts directly (tyrosine phosphorylated) with SHB. Interacts (tyrosine phosphorylated) with PIK3R1 and RASA1. Interacts (tyrosine phosphorylated) with CBL. Interacts (tyrosine phosphorylated) with SRC and SRC family kinases. Interacts (tyrosine phosphorylated) with PIK3C2B, maybe indirectly. Interacts (tyrosine phosphorylated) with SHC1, GRB7, GRB10 and NCK1. Interaction with GRB2 is mediated by SHC1. Interacts (via C-terminus) with NHERF1. In terms of processing, N-glycosylated. Post-translationally, ubiquitinated. After autophosphorylation, the receptor is polyubiquitinated, leading to its degradation. Autophosphorylated on tyrosine residues upon ligand binding. Autophosphorylation occurs in trans, i.e. one subunit of the dimeric receptor phosphorylates tyrosine residues on the other subunit. Phosphorylation at Tyr-578, and to a lesser degree, Tyr-580 is important for interaction with SRC. Phosphorylation at Tyr-715 is important for interaction with GRB2. Phosphorylation at Tyr-739 and Tyr-750 is important for interaction with PIK3R1. Phosphorylation at Tyr-750 is important for interaction with NCK1. Phosphorylation at Tyr-770 and Tyr-856 is important for interaction with RASA1/GAP. Phosphorylation at Tyr-856 is important for efficient phosphorylation of PLCG1 and PTPN11, resulting in increased phosphorylation of AKT1, MAPK1/ERK2 and/or MAPK3/ERK1, PDCD6IP/ALIX and STAM, and in increased cell proliferation. Phosphorylation at Tyr-1008 is important for interaction with PTPN11. Phosphorylation at Tyr-1008 and Tyr-1020 is important for interaction with PLCG1. Dephosphorylated by PTPRJ at Tyr-750, Tyr-856, Tyr-1008 and Tyr-1020. Dephosphorylated by PTPN2 at Tyr-578 and Tyr-1020.

The protein resides in the cell membrane. It is found in the cytoplasmic vesicle. Its subcellular location is the lysosome lumen. It carries out the reaction L-tyrosyl-[protein] + ATP = O-phospho-L-tyrosyl-[protein] + ADP + H(+). Its activity is regulated as follows. Present in an inactive conformation in the absence of bound ligand. Binding of PDGFB and/or PDGFD leads to dimerization and activation by autophosphorylation on tyrosine residues. Functionally, tyrosine-protein kinase that acts as a cell-surface receptor for homodimeric PDGFB and PDGFD and for heterodimers formed by PDGFA and PDGFB, and plays an essential role in the regulation of embryonic development, cell proliferation, survival, differentiation, chemotaxis and migration. Plays an essential role in blood vessel development by promoting proliferation, migration and recruitment of pericytes and smooth muscle cells to endothelial cells. Plays a role in the migration of vascular smooth muscle cells and the formation of neointima at vascular injury sites. Required for normal development of the cardiovascular system. Required for normal recruitment of pericytes (mesangial cells) in the kidney glomerulus, and for normal formation of a branched network of capillaries in kidney glomeruli. Promotes rearrangement of the actin cytoskeleton and the formation of membrane ruffles. Binding of its cognate ligands - homodimeric PDGFB, heterodimers formed by PDGFA and PDGFB or homodimeric PDGFD -leads to the activation of several signaling cascades; the response depends on the nature of the bound ligand and is modulated by the formation of heterodimers between PDGFRA and PDGFRB. Phosphorylates PLCG1, PIK3R1, PTPN11, RASA1/GAP, CBL, SHC1 and NCK1. Activation of PLCG1 leads to the production of the cellular signaling molecules diacylglycerol and inositol 1,4,5-trisphosphate, mobilization of cytosolic Ca(2+) and the activation of protein kinase C. Phosphorylation of PIK3R1, the regulatory subunit of phosphatidylinositol 3-kinase, leads to the activation of the AKT1 signaling pathway. Phosphorylation of SHC1, or of the C-terminus of PTPN11, creates a binding site for GRB2, resulting in the activation of HRAS, RAF1 and down-stream MAP kinases, including MAPK1/ERK2 and/or MAPK3/ERK1. Promotes phosphorylation and activation of SRC family kinases. Promotes phosphorylation of PDCD6IP/ALIX and STAM. Receptor signaling is down-regulated by protein phosphatases that dephosphorylate the receptor and its down-stream effectors, and by rapid internalization of the activated receptor. In Rattus norvegicus (Rat), this protein is Platelet-derived growth factor receptor beta (Pdgfrb).